The sequence spans 218 residues: Sodium channel regulatory subunit beta-1 (218 aa).

The signal sequence occupies residues 1–18 (MGTLLALVVGAVLVSSAW). Residues 19 to 157 (GGCVEVDSET…DKANRDMASI (139 aa)) are Extracellular-facing. 2 disulfides stabilise this stretch: Cys-21-Cys-43 and Cys-40-Cys-121. One can recognise an Ig-like C2-type domain in the interval 22 to 150 (VEVDSETEAV…KIHLEVVDKA (129 aa)). Residues Asn-93, Asn-110, Asn-114, and Asn-135 are each glycosylated (N-linked (GlcNAc...) asparagine). Residues 158–179 (VSEIMMYVLIVVLTIWLVAEMV) traverse the membrane as a helical segment. At 180-218 (YCYKKIAAATEAAAQENASEYLAITSESKENCTGVQVAE) the chain is on the cytoplasmic side.

This sequence belongs to the sodium channel auxiliary subunit SCN1B (TC 8.A.17) family. In terms of assembly, a voltage-gated sodium (Nav) channel consists of an ion-conducting pore-forming alpha subunit functional on its own that is regulated by one or more beta subunits. Interacts with SCN1A; regulatory subunit of SCN1A/Nav1.1. Interacts with SCN3A; regulatory subunit of SCN3A/Nav1.3. Interacts with SCN4A; regulatory subunit of SCN4A/Nav1.4. Interacts with SCN5A; regulatory subunit of SCN5A/Nav1.5. Interacts with SCN8A; regulatory subunit of SCN8A/Nav1.6. Interacts with SCN9A; regulatory subunit of SCN9A/Nav1.7. Interacts with SCN10A; regulatory subunit of SCN10A/Nav1.8. Interacts with NFASC. Interacts with TMEM65. As to expression, detected in brain (at protein level). Expressed in brain, heart, skeletal muscle and spinal cord.

Its subcellular location is the cell membrane. It is found in the perikaryon. The protein localises to the cell projection. It localises to the axon. Its function is as follows. Regulatory subunit of multiple voltage-gated sodium (Nav) channels directly mediating the depolarization of excitable membranes. Navs, also called VGSCs (voltage-gated sodium channels) or VDSCs (voltage-dependent sodium channels), operate by switching between closed and open conformations depending on the voltage difference across the membrane. In the open conformation they allow Na(+) ions to selectively pass through the pore, along their electrochemical gradient. The influx of Na+ ions provokes membrane depolarization, initiating the propagation of electrical signals throughout cells and tissues. The accessory beta subunits participate in localization and functional modulation of the Nav channels. Modulates the activity of SCN1A/Nav1.1, SCN2A/Nav1.2, SCN3A/Nav1.3, SCN4A/Nav1.4, SCN5A/Nav1.5, SCN8A/Nav1.6, SCN9A/Nav1.7 and SCN10A/Nav1.8. The polypeptide is Sodium channel regulatory subunit beta-1 (Rattus norvegicus (Rat)).